A 228-amino-acid chain; its full sequence is MSITNWPACERPREKLQECGAAALSDAELLAVFLRVGATGKSAVELARDLMVRFGSLTRLFTADARAVLGIRGMGEAKYTQLQAVPELARRMLAESLELPSGLDSPAAVRSYLRLTLAPLAQEVFVCLFLDTRNRMIASEELFRGTLNQTAVYPREVARRALAHNAASVIVAHNHPSGCCTPSQSDLQMTRMLARALDLIDVRLLDHFVVAGTHVHSFAEHGELKTAT.

The region spanning 102–224 (GLDSPAAVRS…VHSFAEHGEL (123 aa)) is the MPN domain. 3 residues coordinate Zn(2+): histidine 173, histidine 175, and aspartate 186. The JAMM motif motif lies at 173 to 186 (HNHPSGCCTPSQSD).

The protein belongs to the UPF0758 family.

This Cupriavidus pinatubonensis (strain JMP 134 / LMG 1197) (Cupriavidus necator (strain JMP 134)) protein is UPF0758 protein Reut_A2732.